A 350-amino-acid polypeptide reads, in one-letter code: MAMRQTPLTCSGHTRPVVDLAFSGVTPYGYFLISACKDGKPMLRQGDTGDWIGTFLGHKGAVWGATLNKDATKAATAAADFTAKVWDAVSGDELITLAHKHIVKSVDFTQDSNYLLTGGQDKLLRIYDLSKPEAEPDVVSGHTSGIKKALWSSDDKQILSADDKTVRLWDRSTMTEVKALNVAMSVSSMEYVPEGQILVITYGKTIAFHSAETLEQIKSFEAPATINSASLHPEKECLVAGGEDFKLYKYDYNTGEELESYKGHFGPIHCVRFSPDGELYASGSEDGTLRLWQTTVGKTYGLWKCVVPEEENAEAAKARTTLPGTAEEEIEEVASENSDSVYSSTPEVKA.

7 WD repeats span residues 12–56 (GHTR…GTFL), 57–96 (GHKG…ELIT), 98–137 (AHKH…AEPD), 141–179 (GHTS…EVKA), 180–212 (LNVA…HSAE), 221–262 (EAPA…ESYK), and 263–302 (GHFG…TYGL). The interval 311–350 (ENAEAAKARTTLPGTAEEEIEEVASENSDSVYSSTPEVKA) is disordered. The span at 335–350 (SENSDSVYSSTPEVKA) shows a compositional bias: polar residues.

Belongs to the WD repeat STRAP family. As to quaternary structure, part of the core SMN complex.

The protein resides in the cytoplasm. Its subcellular location is the nucleus. Functionally, the SMN complex catalyzes the assembly of small nuclear ribonucleoproteins (snRNPs), the building blocks of the spliceosome, and thereby plays an important role in the splicing of cellular pre-mRNAs. Most spliceosomal snRNPs contain a common set of Sm proteins SNRPB, SNRPD1, SNRPD2, SNRPD3, SNRPE, SNRPF and SNRPG that assemble in a heptameric protein ring on the Sm site of the small nuclear RNA to form the core snRNP (Sm core). In the cytosol, the Sm proteins SNRPD1, SNRPD2, SNRPE, SNRPF and SNRPG are trapped in an inactive 6S pICln-Sm complex by the chaperone CLNS1A that controls the assembly of the core snRNP. To assemble core snRNPs, the SMN complex accepts the trapped 5Sm proteins from CLNS1A forming an intermediate. Binding of snRNA inside 5Sm triggers eviction of the SMN complex, thereby allowing binding of SNRPD3 and SNRPB to complete assembly of the core snRNP. STRAP plays a role in the cellular distribution of the SMN complex. The sequence is that of Serine-threonine kinase receptor-associated protein (STRAP) from Gallus gallus (Chicken).